A 154-amino-acid polypeptide reads, in one-letter code: Protein X (154 aa).

Residues 68–117 (PCALRFTSARRMETTVNAHGNLPKVLHKRTLGLSAMSTTDLEAYFKDCVF) are mitochondrial targeting sequence.

It belongs to the orthohepadnavirus protein X family. As to quaternary structure, may form homodimer. May interact with host CEBPA, CFLAR, CREB1, DDB1, E4F1, HBXIP, HSPD1/HSP60, NFKBIA, POLR2E and SMAD4. Interacts with host SMC5-SMC6 complex and induces its degradation. Interacts with host TRPC4AP; leading to prevent ubiquitination of TRPC4AP. Interacts with host PLSCR1; this interaction promotes ubiquitination and degradation of HBx and impairs HBx-mediated cell proliferation. A fraction may be phosphorylated in insect cells and HepG2 cells, a human hepatoblastoma cell line. Phosphorylated in vitro by host protein kinase C or mitogen-activated protein kinase. N-acetylated in insect cells.

It localises to the host cytoplasm. Its subcellular location is the host nucleus. It is found in the host mitochondrion. In terms of biological role, multifunctional protein that plays a role in silencing host antiviral defenses and promoting viral transcription. Does not seem to be essential for HBV infection. May be directly involved in development of cirrhosis and liver cancer (hepatocellular carcinoma). Most of cytosolic activities involve modulation of cytosolic calcium. The effect on apoptosis is controversial depending on the cell types in which the studies have been conducted. May induce apoptosis by localizing in mitochondria and causing loss of mitochondrial membrane potential. May also modulate apoptosis by binding host CFLAR, a key regulator of the death-inducing signaling complex (DISC). Promotes viral transcription by using the host E3 ubiquitin ligase DDB1 to target the SMC5-SMC6 complex to proteasomal degradation. This host complex would otherwise bind to viral episomal DNA, and prevents its transcription. Moderately stimulates transcription of many different viral and cellular transcription elements. Promoters and enhancers stimulated by HBx contain DNA binding sites for NF-kappa-B, AP-1, AP-2, c-EBP, ATF/CREB, or the calcium-activated factor NF-AT. The protein is Protein X of Hepatitis B virus genotype B/C subtype adw (isolate Okinawa/pODW282/1998) (HBV-B).